Here is an 87-residue protein sequence, read N- to C-terminus: Putative regulatory protein GTNG_1019 (87 aa).

Belongs to the RemA family.

This Geobacillus thermodenitrificans (strain NG80-2) protein is Putative regulatory protein GTNG_1019.